The primary structure comprises 248 residues: Granzyme B (248 aa).

An N-terminal signal peptide occupies residues 1-18 (MKLLLLLLSFSLAPKTEA). A propeptide spans 19 to 20 (GE) (activation peptide). One can recognise a Peptidase S1 domain in the interval 21–246 (IIGGHEAKPH…FLSWIKKTMK (226 aa)). An intrachain disulfide couples Cys50 to Cys66. Residues His65 and Asp109 each act as charge relay system in the active site. Cystine bridges form between Cys143–Cys210 and Cys174–Cys189. Catalysis depends on Ser204, which acts as the Charge relay system.

The protein belongs to the peptidase S1 family. Granzyme subfamily.

It is found in the secreted. The protein resides in the cytolytic granule. The catalysed reaction is Preferential cleavage: -Asp-|-Xaa- &gt;&gt; -Asn-|-Xaa- &gt; -Met-|-Xaa-, -Ser-|-Xaa-.. Inactivated by the serine protease inhibitor diisopropylfluorophosphate. Its function is as follows. Abundant protease in the cytosolic granules of cytotoxic T-cells and NK-cells which activates caspase-independent pyroptosis when delivered into the target cell through the immunological synapse. It cleaves after Asp. Once delivered into the target cell, acts by catalyzing cleavage of gasdermin-E (GSDME), releasing the pore-forming moiety of GSDME, thereby triggering pyroptosis and target cell death. Seems to be linked to an activation cascade of caspases (aspartate-specific cysteine proteases) responsible for apoptosis execution. Cleaves caspase-3 and -9 (CASP3 and CASP9, respectively) to give rise to active enzymes mediating apoptosis. Cleaves and activates CASP7 in response to bacterial infection, promoting plasma membrane repair. The polypeptide is Granzyme B (Gzmb) (Rattus norvegicus (Rat)).